A 384-amino-acid chain; its full sequence is Spermidine/putrescine import ATP-binding protein PotA (384 aa).

Positions 6–238 (ITFNNVSKTF…PINHFVANFI (233 aa)) constitute an ABC transporter domain. Residue 40-47 (GASGSGKS) participates in ATP binding.

This sequence belongs to the ABC transporter superfamily. Spermidine/putrescine importer (TC 3.A.1.11.1) family. The complex is composed of two ATP-binding proteins (PotA), two transmembrane proteins (PotB and PotC) and a solute-binding protein (PotD).

The protein resides in the cell membrane. It catalyses the reaction ATP + H2O + polyamine-[polyamine-binding protein]Side 1 = ADP + phosphate + polyamineSide 2 + [polyamine-binding protein]Side 1.. Its function is as follows. Part of the ABC transporter complex PotABCD involved in spermidine/putrescine import. Responsible for energy coupling to the transport system. The sequence is that of Spermidine/putrescine import ATP-binding protein PotA from Streptococcus pyogenes serotype M18 (strain MGAS8232).